The primary structure comprises 75 residues: CLAVATA3/ESR (CLE)-related protein 33 (75 aa).

Residues 1-22 (MASWRMLCFVLLFTSILICHDA) form the signal peptide. 2 positions are modified to hydroxyproline: proline 67 and proline 70. Residue proline 70 is glycosylated (O-linked (Ara...) hydroxyproline).

The protein belongs to the CLV3/ESR signal peptide family. The O-glycosylation (arabinosylation) of the hydroxyproline Pro-70 enhances binding affinity of the CLE33p peptide for its receptor. As to expression, expressed in root vasculature.

The protein localises to the secreted. Its subcellular location is the extracellular space. Its function is as follows. Signaling peptide involved in the regulation of root colonization by arbuscular mycorrhizal (AM) fungi. Moves from root to shoot to function with the receptor kinase SUNN, in a signaling pathway that repress strigolactone biosynthetic genes and strigolactone content in the roots, and consequently reduces the promotion of further colonization by AM fungi. In Medicago truncatula (Barrel medic), this protein is CLAVATA3/ESR (CLE)-related protein 33.